We begin with the raw amino-acid sequence, 2466 residues long: Highly reducing polyketide synthase apmlA (2466 aa).

The segment at M1 to S57 is disordered. Low complexity predominate over residues N41–G53. The 430-residue stretch at Q62 to A491 folds into the Ketosynthase family 3 (KS3) domain. Catalysis depends on for beta-ketoacyl synthase activity residues C235, H372, and H412. Positions I608–A921 are malonyl-CoA:ACP transacylase (MAT) domain. The active-site For malonyltransferase activity is S700. The N-terminal hotdog fold stretch occupies residues H988–F1124. The tract at residues H988 to D1297 is dehydratase (DH) domain. In terms of domain architecture, PKS/mFAS DH spans H988 to Q1298. H1020 acts as the Proton acceptor; for dehydratase activity in catalysis. Residues A1137–Q1298 form a C-terminal hotdog fold region. Catalysis depends on D1202, which acts as the Proton donor; for dehydratase activity. Residues G1737–L2061 are enoyl reductase (ER) domain. Residues T2087–Q2264 form a ketoreductase (KR) domain region. The Carrier domain maps to A2382–V2462. Position 2422 is an O-(pantetheine 4'-phosphoryl)serine (S2422).

It depends on pantetheine 4'-phosphate as a cofactor.

Its pathway is secondary metabolite biosynthesis. Functionally, highly reducing polyketide synthase (HR-PKS); part of the gene cluster that mediates the biosynthesis of phaeospelide A, a fungal polyene macrolide with a 34-membered macrolactone ring and an all-trans conjugated hexaene structure. The HR-PKS ApmlA uses acetyl-CoA and malonyl-CoA as its starter and extender units, respectively, and provides the large carbon framework in phaeospelide via 16 cycles of polyketide chain elongation, which is the largest number identified in fungal iterative PKSs thus far. During round 1, the KR domain reduces beta-ketone to an L-oriented hydroxy group, while during later rounds, it provides hydroxy groups in the D-configuration. The characteristic conjugated hexaene moiety is built during the later rounds (10-15), when the KR and DH domains are at work but ER is off. Phylogenetic analysis of the DH domain suggests that a polyene formation is programmed in the DH domain. Finally, the mature ACP-tethered carbon chain is transferred to the serine residue of the thiohydrolase apmlB, followed by intramolecular macrolactonization, generating phaeospelide A. When one elongation cycle during rounds 7-9 is skipped, phaeospelide B is biosynthesized instead. This Arthrinium phaeospermum (Gymnosporium phaeospermum) protein is Highly reducing polyketide synthase apmlA.